The primary structure comprises 297 residues: Probable endonuclease 4 (297 aa).

Residues His-68, His-109, Glu-144, Asp-178, His-181, His-213, Asp-226, His-228, and Glu-258 each coordinate Zn(2+).

Belongs to the AP endonuclease 2 family. It depends on Zn(2+) as a cofactor.

The enzyme catalyses Endonucleolytic cleavage to 5'-phosphooligonucleotide end-products.. Functionally, endonuclease IV plays a role in DNA repair. It cleaves phosphodiester bonds at apurinic or apyrimidinic (AP) sites, generating a 3'-hydroxyl group and a 5'-terminal sugar phosphate. This is Probable endonuclease 4 from Enterococcus faecalis (strain ATCC 700802 / V583).